The following is a 146-amino-acid chain: D-aminoacyl-tRNA deacylase (146 aa).

A Gly-cisPro motif, important for rejection of L-amino acids motif is present at residues 137–138; the sequence is GP.

The protein belongs to the DTD family. In terms of assembly, homodimer.

The protein localises to the cytoplasm. The enzyme catalyses glycyl-tRNA(Ala) + H2O = tRNA(Ala) + glycine + H(+). The catalysed reaction is a D-aminoacyl-tRNA + H2O = a tRNA + a D-alpha-amino acid + H(+). An aminoacyl-tRNA editing enzyme that deacylates mischarged D-aminoacyl-tRNAs. Also deacylates mischarged glycyl-tRNA(Ala), protecting cells against glycine mischarging by AlaRS. Acts via tRNA-based rather than protein-based catalysis; rejects L-amino acids rather than detecting D-amino acids in the active site. By recycling D-aminoacyl-tRNA to D-amino acids and free tRNA molecules, this enzyme counteracts the toxicity associated with the formation of D-aminoacyl-tRNA entities in vivo and helps enforce protein L-homochirality. The polypeptide is D-aminoacyl-tRNA deacylase (Variovorax paradoxus (strain S110)).